A 500-amino-acid polypeptide reads, in one-letter code: Versicolorin B desaturase (500 aa).

A helical membrane pass occupies residues 3 to 23 (FLSLPSLVIVIPVGYLLFHLG). N-linked (GlcNAc...) asparagine glycans are attached at residues asparagine 243 and asparagine 400. Cysteine 438 is a heme binding site.

The protein belongs to the cytochrome P450 family. It depends on heme as a cofactor.

It is found in the membrane. The enzyme catalyses versicolorin B + NADPH + O2 + H(+) = versicolorin A + NADP(+) + 2 H2O. Its pathway is mycotoxin biosynthesis; aflatoxin biosynthesis. In terms of biological role, versicolorin B desaturase; part of the gene cluster that mediates the biosynthesis of aflatoxins, a group of polyketide-derived furanocoumarins, and part of the most toxic and carcinogenic compounds among the known mycotoxins. The four major aflatoxins produced by A.parasiticus are aflatoxin B1 (AFB1), aflatoxin B2 (AFB2), aflatoxin G1 (AFG1) and aflatoxin G2 (AFG2). Within the aflatoxin pathway, the versicolorin B desaturase aflL catalyzes the conversion of versicolorin B (VERB) to versicolorin A (VERA). The biosynthesis of aflatoxins begins with the norsolorinic acid synthase aflC that combines a hexanoyl starter unit produced by the fatty acid synthase aflA/aflB and 7 malonyl-CoA extender units to synthesize the precursor NOR. The second step is the conversion of NOR to averantin and requires the norsolorinic acid ketoreductase aflD, which catalyzes the dehydration of norsolorinic acid to form (1'S)-averantin. The norsolorinic acid reductases aflE and aflF may also play a role in the conversion of NOR to AVN. The cytochrome P450 monooxygenase aflG then catalyzes the hydroxylation of AVN to 5'hydroxyaverantin (HAVN). The next step is performed by the 5'-hydroxyaverantin dehydrogenase aflH that transforms HAVN to 5'-oxoaverantin (OAVN) which is further converted to averufin (AVF) by aflK that plays a dual role in the pathway, as a 5'-oxoaverantin cyclase that mediates conversion of 5'-oxoaverantin, as well as a versicolorin B synthase in a later step in the pathway. The averufin oxidase aflI catalyzes the conversion of AVF to versiconal hemiacetal acetate (VHA). VHA is then the substrate for the versiconal hemiacetal acetate esterase aflJ to yield versiconal (VAL). Versicolorin B synthase aflK then converts VAL to versicolorin B (VERB) by closing the bisfuran ring of aflatoxin which is required for DNA-binding, thus giving to aflatoxin its activity as a mutagen. Then, the activity of the versicolorin B desaturase aflL leads to versicolorin A (VERA). A branch point starts from VERB since it can also be converted to dihydrodemethylsterigmatocystin (DMDHST), probably also by aflL, VERA being a precursor for aflatoxins B1 and G1, and DMDHST for aflatoxins B2 and G2. Next, the versicolorin reductase aflM and the cytochrome P450 monooxygenase aflN are involved in conversion of VERA to demethylsterigmatocystin (DMST). AflX and aflY seem also involved in this step, through probable aflX-mediated epoxide ring-opening step following versicolorin A oxidation and aflY-mediated Baeyer-Villiger oxidation required for the formation of the xanthone ring. The methyltransferase aflO then leads to the modification of DMST to sterigmatocystin (ST), and of DMDHST to dihydrosterigmatocystin (DHST). Both ST and DHST are then substrates of the O-methyltransferase aflP to yield O-methylsterigmatocystin (OMST) and dihydro-O-methylsterigmatocystin (DHOMST), respectively. Finally OMST is converted to aflatoxins B1 and G1, and DHOMST to aflatoxins B2 and G2, via the action of several enzymes including O-methylsterigmatocystin oxidoreductase aflQ, the cytochrome P450 monooxygenase aflU, but also the NADH-dependent flavin oxidoreductase nadA which is specifically required for the synthesis of AFG1. In Aspergillus parasiticus (strain ATCC 56775 / NRRL 5862 / SRRC 143 / SU-1), this protein is Versicolorin B desaturase.